Reading from the N-terminus, the 887-residue chain is Valine--tRNA ligase (887 aa).

The 'HIGH' region motif lies at 48–58 (PNVTGVLHVGH). The short motif at 527 to 531 (KMSKS) is the 'KMSKS' region element. Position 530 (Lys-530) interacts with ATP. Residues 814–887 (LAGLVDIEAE…EASDRLKKLS (74 aa)) adopt a coiled-coil conformation.

It belongs to the class-I aminoacyl-tRNA synthetase family. ValS type 1 subfamily. Monomer.

The protein localises to the cytoplasm. It catalyses the reaction tRNA(Val) + L-valine + ATP = L-valyl-tRNA(Val) + AMP + diphosphate. Its function is as follows. Catalyzes the attachment of valine to tRNA(Val). As ValRS can inadvertently accommodate and process structurally similar amino acids such as threonine, to avoid such errors, it has a 'posttransfer' editing activity that hydrolyzes mischarged Thr-tRNA(Val) in a tRNA-dependent manner. This is Valine--tRNA ligase from Desulfotalea psychrophila (strain LSv54 / DSM 12343).